We begin with the raw amino-acid sequence, 263 residues long: Insertion sequence IS21-like putative ATP-binding protein (263 aa).

Residue 114 to 121 coordinates ATP; that stretch reads GPSGTGKT.

It belongs to the IS21/IS1162 putative ATP-binding protein family.

The chain is Insertion sequence IS21-like putative ATP-binding protein (tnpB) from Bacteroides fragilis.